Here is a 1007-residue protein sequence, read N- to C-terminus: Serine/threonine-protein kinase PRP4 homolog (1007 aa).

The tract at residues 1 to 104 is disordered; sequence MAATEPPSLR…PAKRTKLDDL (104 aa). Residue Ala-2 is modified to N-acetylalanine. A phosphoserine mark is found at Ser-8, Ser-21, Ser-24, and Ser-33. Basic residues-rich tracts occupy residues 40–60 and 68–82; these read KHSRHKKKKHKHRSKHKKHKH and KKHKHKHKHKKHKRK. Basic and acidic residues predominate over residues 83–92; the sequence is EVLDASDKEG. 2 positions are modified to phosphoserine: Ser-88 and Ser-94. Lys-100 carries the N6-acetyllysine; alternate modification. Lys-100 is covalently cross-linked (Glycyl lysine isopeptide (Lys-Gly) (interchain with G-Cter in SUMO2); alternate). Residue Lys-112 forms a Glycyl lysine isopeptide (Lys-Gly) (interchain with G-Cter in SUMO2) linkage. Residue Lys-118 forms a Glycyl lysine isopeptide (Lys-Gly) (interchain with G-Cter in SUMO2); alternate linkage. Residue Lys-118 forms a Glycyl lysine isopeptide (Lys-Gly) (interchain with G-Cter in SUMO1); alternate linkage. Phosphoserine is present on Ser-132. Tyr-141 is subject to Phosphotyrosine. Disordered regions lie at residues 141-535 and 560-583; these read YESG…EDEE and NISVPSEPSSPQSSTRSRSPSPDD. A phosphoserine mark is found at Ser-143, Ser-145, and Ser-167. Residues 158–169 are compositionally biased toward low complexity; that stretch reads GNRSSTRSSSTR. Residues Lys-171 and Lys-178 each participate in a glycyl lysine isopeptide (Lys-Gly) (interchain with G-Cter in SUMO2) cross-link. 2 stretches are compositionally biased toward basic residues: residues 180-203 and 215-231; these read SAKKRSKSRSKERTRHRSDKRKSK and RSKSKERRKSKSPSKRS. Phosphoserine is present on residues Ser-240, Ser-242, Ser-258, Ser-278, Ser-292, and Ser-294. Positions 248–271 are enriched in basic and acidic residues; sequence RSQEKVGKARSPADEKIKSEEKGK. Residues 294 to 303 show a composition bias toward basic and acidic residues; that stretch reads SPVDLRDKSK. Residues 304–315 are compositionally biased toward basic residues; that stretch reads DRRSRSKERKSK. Residues 316–325 are compositionally biased toward basic and acidic residues; the sequence is RSEIDKEKKP. Phosphoserine is present on residues Ser-328, Ser-354, Ser-356, Ser-366, and Ser-368. The span at 342–367 shows a compositional bias: basic residues; it reads PSRRPGRSPKRRSLSPKQRDKSRRSR. Thr-385 is modified (phosphothreonine). Ser-387 bears the Phosphoserine mark. Composition is skewed to basic and acidic residues over residues 395 to 408 and 415 to 429; these read RSLERKRREPERRR and RPRDDILGRCERSKD. 3 positions are modified to phosphoserine: Ser-427, Ser-431, and Ser-437. The segment covering 438–497 has biased composition (basic residues); it reads PSRRRSRSPIRRRSRSPLRRSRSPRRRSRSPRRRDRSRRSRSRLRRRSRSRGGHRRRSRS. Residues Ser-518, Ser-519, Ser-520, Ser-565, Ser-569, Ser-576, Ser-578, and Ser-580 each carry the phosphoserine modification. Over residues 518–535 the composition is skewed to acidic residues; it reads SSSDDNLEDFDVEEEDEE. Residues 562 to 581 show a composition bias toward low complexity; that stretch reads SVPSEPSSPQSSTRSRSPSP. Glycyl lysine isopeptide (Lys-Gly) (interchain with G-Cter in SUMO2) cross-links involve residues Lys-593 and Lys-659. The region spanning 687-1003 is the Protein kinase domain; it reads YNVYGYTGQG…INQALQHAFI (317 aa). ATP-binding positions include 693 to 701 and Lys-717; that span reads TGQGVFSNV. Position 717 is an N6-acetyllysine (Lys-717). Asp-815 serves as the catalytic Proton acceptor. At Tyr-849 the chain carries Phosphotyrosine. A Phosphoserine modification is found at Ser-852.

It belongs to the protein kinase superfamily. CMGC Ser/Thr protein kinase family. Interacts with CLK1 C-terminus. Associates with the U5 snRNP and NCOR1 deacetylase complexes. Identified in the spliceosome C complex. Post-translationally, phosphorylated by CLK1. Autophosphorylated; phosphorylation inhibits interaction with its targets, such as PRPF6 or SMARCA4.

It localises to the nucleus. The protein localises to the chromosome. The protein resides in the centromere. Its subcellular location is the kinetochore. The enzyme catalyses L-seryl-[protein] + ATP = O-phospho-L-seryl-[protein] + ADP + H(+). It catalyses the reaction L-threonyl-[protein] + ATP = O-phospho-L-threonyl-[protein] + ADP + H(+). In terms of biological role, serine/threonine kinase involved in spliceosomal assembly as well as mitosis and signaling regulation. Connects chromatin mediated regulation of transcription and pre-mRNA splicing. During spliceosomal assembly, interacts with and phosphorylates PRPF6 and PRPF31, components of the U4/U6-U5 tri-small nuclear ribonucleoprotein (snRNP), to facilitate the formation of the spliceosome B complex. Plays a role in regulating transcription and the spindle assembly checkpoint (SAC). Associates with U5 snRNP and NCOR1 deacetylase complexes which may allow a coordination of pre-mRNA splicing with chromatin remodeling events involved in transcriptional regulation. Associates and probably phosphorylates SMARCA4 and NCOR1. Phosphorylates SRSF1. Associates with kinetochores during mitosis and is necessary for recruitment and maintenance of the checkpoint proteins such as MAD1L1 and MAD12L1 at the kinetochores. Phosphorylates and regulates the activity of the transcription factors such as ELK1 and KLF13. Phosphorylates nuclear YAP1 and WWTR1/TAZ which induces nuclear exclusion and regulates Hippo signaling pathway, involved in tissue growth control. The polypeptide is Serine/threonine-protein kinase PRP4 homolog (Prp4k) (Rattus norvegicus (Rat)).